Here is a 227-residue protein sequence, read N- to C-terminus: MSIIGRFKDIMSANINALLDKAENPEKMVDQYLRNMNSDLAKVKAETAAVMAEEQRAKREYHECQADMEKMESYAMKALQAGNESDARKFLERKTSLESKLSELQAANQIAATNAAQMRKMHDKLVSDIGELEARKNMIKAKWAVAKTQERMNKLGASVSSTSQSMSAFGRMEDKVNKALDQANAMAELNSAPQDDMADLSAKYDTGGSSQVDDELAALKAKMMLDK.

Positions 33–125 (LRNMNSDLAK…AQMRKMHDKL (93 aa)) form a coiled coil. The tract at residues 191–211 (SAPQDDMADLSAKYDTGGSSQ) is disordered.

Belongs to the PspA/Vipp/IM30 family.

This Bacillus subtilis (strain 168) protein is Phage shock protein A homolog (ydjF).